Here is a 480-residue protein sequence, read N- to C-terminus: Cysteine--tRNA ligase (480 aa).

Cys27 contributes to the Zn(2+) binding site. Positions 29–39 match the 'HIGH' region motif; that stretch reads PTVYNYAHIGN. Cys221, His246, and Glu250 together coordinate Zn(2+). Positions 278–282 match the 'KMSKS' region motif; the sequence is KMSKS. ATP is bound at residue Lys281.

Belongs to the class-I aminoacyl-tRNA synthetase family. Monomer. The cofactor is Zn(2+).

The protein resides in the cytoplasm. It carries out the reaction tRNA(Cys) + L-cysteine + ATP = L-cysteinyl-tRNA(Cys) + AMP + diphosphate. This is Cysteine--tRNA ligase from Borreliella afzelii (strain PKo) (Borrelia afzelii).